We begin with the raw amino-acid sequence, 502 residues long: Cytochrome c-552 (502 aa).

Residues 1–25 (MKYLTKSRVIATIAMLGCLSVSAWA) form the signal peptide. Histidine 105 contributes to the heme c binding site. Heme contacts are provided by cysteine 133, cysteine 136, and lysine 137. Positions 171, 174, 175, 220, 223, and 224 each coordinate heme c. The Ca(2+) site is built by glutamate 226, tyrosine 227, lysine 271, and glutamine 273. Residue tyrosine 227 coordinates substrate. Residue histidine 274 coordinates substrate. Residues histidine 285, cysteine 292, cysteine 295, histidine 296, histidine 311, cysteine 324, cysteine 327, histidine 328, and histidine 403 each coordinate heme c. The interval 481–502 (RERGLLPEVTPKSVTTPKVDAK) is disordered.

The protein belongs to the cytochrome c-552 family. It depends on Ca(2+) as a cofactor. Requires heme c as cofactor.

The protein resides in the periplasm. The enzyme catalyses 6 Fe(III)-[cytochrome c] + NH4(+) + 2 H2O = 6 Fe(II)-[cytochrome c] + nitrite + 8 H(+). It functions in the pathway nitrogen metabolism; nitrate reduction (assimilation). Its function is as follows. Catalyzes the reduction of nitrite to ammonia, consuming six electrons in the process. This Haemophilus ducreyi (strain 35000HP / ATCC 700724) protein is Cytochrome c-552.